A 130-amino-acid chain; its full sequence is Large-conductance mechanosensitive channel (130 aa).

The next 2 membrane-spanning stretches (helical) occupy residues 14-34 and 73-93; these read IIDL…VTSF and FVDF…LVKF.

This sequence belongs to the MscL family. Homopentamer.

It is found in the cell membrane. Functionally, channel that opens in response to stretch forces in the membrane lipid bilayer. May participate in the regulation of osmotic pressure changes within the cell. This Oceanobacillus iheyensis (strain DSM 14371 / CIP 107618 / JCM 11309 / KCTC 3954 / HTE831) protein is Large-conductance mechanosensitive channel.